The chain runs to 91 residues: CRISPR-associated endoribonuclease Cas2 (91 aa).

Residue Asp-14 participates in Mg(2+) binding.

This sequence belongs to the CRISPR-associated endoribonuclease Cas2 protein family. As to quaternary structure, homodimer, forms a heterotetramer with a Cas1 homodimer. Requires Mg(2+) as cofactor.

In terms of biological role, CRISPR (clustered regularly interspaced short palindromic repeat), is an adaptive immune system that provides protection against mobile genetic elements (viruses, transposable elements and conjugative plasmids). CRISPR clusters contain sequences complementary to antecedent mobile elements and target invading nucleic acids. CRISPR clusters are transcribed and processed into CRISPR RNA (crRNA). Functions as a ssRNA-specific endoribonuclease. Involved in the integration of spacer DNA into the CRISPR cassette. The sequence is that of CRISPR-associated endoribonuclease Cas2 from Nanoarchaeum equitans (strain Kin4-M).